A 411-amino-acid chain; its full sequence is L-cysteine:1D-myo-inositol 2-amino-2-deoxy-alpha-D-glucopyranoside ligase (411 aa).

Residue Cys-43 coordinates Zn(2+). Residues 43–46, Thr-58, and 81–83 each bind L-cysteinyl-5'-AMP; these read CGIT and NVT. Residues 45–55 carry the 'HIGH' region motif; the sequence is ITPYDATHLGH. The 'ERGGDP' region motif lies at 186–191; that stretch reads QRGGDP. Residue Trp-226 participates in L-cysteinyl-5'-AMP binding. Residue Cys-230 participates in Zn(2+) binding. 248–250 contacts L-cysteinyl-5'-AMP; it reads GSD. His-255 is a Zn(2+) binding site. Position 282 (Ile-282) interacts with L-cysteinyl-5'-AMP. The 'KMSKS' region motif lies at 288-292; sequence KMSKS.

The protein belongs to the class-I aminoacyl-tRNA synthetase family. MshC subfamily. As to quaternary structure, monomer. The cofactor is Zn(2+).

The catalysed reaction is 1D-myo-inositol 2-amino-2-deoxy-alpha-D-glucopyranoside + L-cysteine + ATP = 1D-myo-inositol 2-(L-cysteinylamino)-2-deoxy-alpha-D-glucopyranoside + AMP + diphosphate + H(+). Catalyzes the ATP-dependent condensation of GlcN-Ins and L-cysteine to form L-Cys-GlcN-Ins. The chain is L-cysteine:1D-myo-inositol 2-amino-2-deoxy-alpha-D-glucopyranoside ligase from Mycobacterium ulcerans (strain Agy99).